The chain runs to 1129 residues: SMC5-SMC6 complex localization factor protein 2 (1129 aa).

Disordered stretches follow at residues V71–N178, N312–A343, and M955–G1057. The span at K72–P87 shows a compositional bias: basic residues. The span at L93–P110 shows a compositional bias: polar residues. 2 stretches are compositionally biased toward basic and acidic residues: residues Q112–L130 and R149–V166. 2 stretches are compositionally biased toward polar residues: residues Q169–N178 and T324–A343. Acidic residues-rich tracts occupy residues E999–W1014 and S1033–S1048.

It belongs to the FAM178 family.

It localises to the nucleus. In terms of biological role, plays a role in the DNA damage response (DDR) pathway by regulating postreplication repair of UV-damaged DNA and genomic stability maintenance. Promotes the recruitment of the SMC5-SMC6 complex to DNA lesions. In Danio rerio (Zebrafish), this protein is SMC5-SMC6 complex localization factor protein 2 (slf2).